Reading from the N-terminus, the 316-residue chain is Nucleotide-binding protein NFA_35930 (316 aa).

Glycine 32–glycine 39 lines the ATP pocket. Aspartate 83–serine 86 lines the GTP pocket.

It belongs to the RapZ-like family.

Functionally, displays ATPase and GTPase activities. The protein is Nucleotide-binding protein NFA_35930 of Nocardia farcinica (strain IFM 10152).